The following is a 767-amino-acid chain: DNA topoisomerase 1 (767 aa).

Positions 1 to 23 (MSGDHLHNDSQIEADFRLNDSHK) are enriched in basic and acidic residues. The segment at 1–201 (MSGDHLHNDS…NKKKKPKKEE (201 aa)) is disordered. Position 2 is an N-acetylserine (serine 2). 2 positions are modified to phosphoserine: serine 2 and serine 10. The span at 24–39 (HKDKHKDREHRHKEHK) shows a compositional bias: basic residues. Residues 40 to 110 (KDKEKDREKS…DAKIKKEKEN (71 aa)) show a composition bias toward basic and acidic residues. Serine 59 bears the Phosphoserine mark. A Glycyl lysine isopeptide (Lys-Gly) (interchain with G-Cter in SUMO2) cross-link involves residue lysine 103. Lysine 105 is covalently cross-linked (Glycyl lysine isopeptide (Lys-Gly) (interchain with G-Cter in SUMO); alternate). Lysine 105 participates in a covalent cross-link: Glycyl lysine isopeptide (Lys-Gly) (interchain with G-Cter in SUMO2); alternate. Serine 114 is modified (phosphoserine). Residue lysine 119 forms a Glycyl lysine isopeptide (Lys-Gly) (interchain with G-Cter in SUMO); alternate linkage. Lysine 119 is covalently cross-linked (Glycyl lysine isopeptide (Lys-Gly) (interchain with G-Cter in SUMO2); alternate). A Glycyl lysine isopeptide (Lys-Gly) (interchain with G-Cter in SUMO1); alternate cross-link involves residue lysine 119. Residues 131–168 (PKEDIKPLKRPRDEDDADYKPKKIKTEDIKKEKKRKLE) are compositionally biased toward basic and acidic residues. Glycyl lysine isopeptide (Lys-Gly) (interchain with G-Cter in SUMO2) cross-links involve residues lysine 136 and lysine 150. A Glycyl lysine isopeptide (Lys-Gly) (interchain with G-Cter in SUMO); alternate cross-link involves residue lysine 155. Lysine 155 participates in a covalent cross-link: Glycyl lysine isopeptide (Lys-Gly) (interchain with G-Cter in SUMO2); alternate. Residues lysine 160 and lysine 166 each participate in a glycyl lysine isopeptide (Lys-Gly) (interchain with G-Cter in SUMO2) cross-link. Residue lysine 174 forms a Glycyl lysine isopeptide (Lys-Gly) (interchain with G-Cter in SUMO2); alternate linkage. Residue lysine 174 is modified to N6-acetyllysine; alternate. Residues 181-201 (KDKDKKGAESDNKKKKPKKEE) show a composition bias toward basic and acidic residues. Lysine 206 is covalently cross-linked (Glycyl lysine isopeptide (Lys-Gly) (interchain with G-Cter in SUMO2)). Lysine 282 bears the N6-acetyllysine mark. Lysine 338 is covalently cross-linked (Glycyl lysine isopeptide (Lys-Gly) (interchain with G-Cter in SUMO2)). Interaction with DNA regions lie at residues 427-428 (KY) and 490-495 (RAGNEK). The Topo IB-type catalytic domain occupies 434–767 (SSRIKGEKDW…IDMTDEDYEF (334 aa)). Serine 508 bears the Phosphoserine; by CK2 mark. Lysine 551 participates in a covalent cross-link: Glycyl lysine isopeptide (Lys-Gly) (interchain with G-Cter in SUMO2). The segment at 587–589 (TAK) is interaction with DNA. Glycyl lysine isopeptide (Lys-Gly) (interchain with G-Cter in SUMO2) cross-links involve residues lysine 644, lysine 702, and lysine 714. Tyrosine 725 functions as the O-(3'-phospho-DNA)-tyrosine intermediate in the catalytic mechanism.

The protein belongs to the type IB topoisomerase family. Monomer. Interacts with ERCC6. Interacts with TPRN; TPRN interacts with a number of DNA damage response proteins, is recruited to sites of DNA damage and may play a role in DNA damage repair. Sumoylated. Lys-119 is the main site of sumoylation. Sumoylation plays a role in partitioning TOP1 between nucleoli and nucleoplasm. Levels are dramatically increased on camptothecin (CPT) treatment. Post-translationally, phosphorylation at Ser-508 by CK2 increases binding to supercoiled DNA and sensitivity to camptothecin.

It is found in the nucleus. Its subcellular location is the nucleolus. It localises to the nucleoplasm. It catalyses the reaction ATP-independent breakage of single-stranded DNA, followed by passage and rejoining.. Its activity is regulated as follows. Specifically inhibited by camptothecin (CPT), a plant alkaloid with antitumor activity. Functionally, releases the supercoiling and torsional tension of DNA introduced during the DNA replication and transcription by transiently cleaving and rejoining one strand of the DNA duplex. Introduces a single-strand break via transesterification at a target site in duplex DNA. The scissile phosphodiester is attacked by the catalytic tyrosine of the enzyme, resulting in the formation of a DNA-(3'-phosphotyrosyl)-enzyme intermediate and the expulsion of a 5'-OH DNA strand. The free DNA strand then rotates around the intact phosphodiester bond on the opposing strand, thus removing DNA supercoils. Finally, in the religation step, the DNA 5'-OH attacks the covalent intermediate to expel the active-site tyrosine and restore the DNA phosphodiester backbone. Regulates the alternative splicing of tissue factor (F3) pre-mRNA in endothelial cells. Involved in the circadian transcription of the core circadian clock component BMAL1 by altering the chromatin structure around the ROR response elements (ROREs) on the BMAL1 promoter. In Cricetulus griseus (Chinese hamster), this protein is DNA topoisomerase 1 (TOP1).